Consider the following 398-residue polypeptide: Homeobox protein knotted-1-like 1 (398 aa).

Disordered stretches follow at residues 43–69 (TFHL…PGTH), 172–192 (EFEA…DPEL), and 234–277 (NNNA…PRAE). A compositionally biased stretch (gly residues) spans 49–58 (SGGGGGGGSG). The region spanning 280–300 (ELKNHLLRKYSGYLSSLKQEL) is the ELK domain. The segment at residues 301–364 (SKKKKKGKLP…NQRKRHWKPS (64 aa)) is a DNA-binding region (homeobox; TALE-type).

This sequence belongs to the TALE/KNOX homeobox family. As to expression, expressed only in the stems.

It is found in the nucleus. Functionally, probably binds to the DNA sequence 5'-TGAC-3'. This is Homeobox protein knotted-1-like 1 from Malus domestica (Apple).